Consider the following 393-residue polypeptide: N-acyl-phosphatidylethanolamine-hydrolyzing phospholipase D (393 aa).

Met1 bears the N-acetylmethionine mark. Positions 1-16 (MDENESNQSLMTSSQY) are enriched in polar residues. Residues 1 to 40 (MDENESNQSLMTSSQYPKEAVRKRQNSARNSGASDSSRFS) form a disordered region. Positions 185 and 187 each coordinate Zn(2+). Residue Tyr188 coordinates an N-acyl-1,2-diacyl-sn-glycero-3-phosphoethanolamine. Residues Asp189, His190, and His253 each contribute to the Zn(2+) site. Deoxycholate is bound by residues Lys256 and Met260. Asp284 serves as a coordination point for Zn(2+). Residue His321 coordinates an N-acyl-1,2-diacyl-sn-glycero-3-phosphoethanolamine. His343 lines the Zn(2+) pocket. Ala348 contributes to the deoxycholate binding site.

The protein belongs to the NAPE-PLD family. Homodimer. Bile acids promote the assembly of inactive monomers into an active dimer and enable catalysis. The cofactor is Zn(2+). In terms of tissue distribution, widely expressed. Highest expression in brain, kidney and testis (at protein level). Expressed in adipose tissue (at protein level).

The protein resides in the golgi apparatus membrane. Its subcellular location is the early endosome membrane. It localises to the nucleus envelope. It is found in the nucleus. The protein localises to the nucleoplasm. It catalyses the reaction an N-acyl-1,2-diacyl-sn-glycero-3-phosphoethanolamine + H2O = an N-acylethanolamine + a 1,2-diacyl-sn-glycero-3-phosphate + H(+). It carries out the reaction N-butanoyl-1-hexadecanoyl-2-(9Z,12Z-octadecadienoyl)-sn-glycero-3-phosphoethanolamine + H2O = N-butanoyl ethanolamine + 1-hexadecanoyl-2-(9Z,12Z-octadecadienoyl)-sn-glycero-3-phosphate + H(+). The catalysed reaction is N-hexanoyl-1-hexadecanoyl-2-(9Z,12Z-octadecadienoyl)-sn-glycero-3-phosphoethanolamine + H2O = N-hexanoyl ethanolamine + 1-hexadecanoyl-2-(9Z,12Z-octadecadienoyl)-sn-glycero-3-phosphate + H(+). The enzyme catalyses N-octanoyl-1-hexadecanoyl-2-(9Z,12Z-octadecadienoyl)-sn-glycero-3-phosphoethanolamine + H2O = N-octanoyl ethanolamine + 1-hexadecanoyl-2-(9Z,12Z-octadecadienoyl)-sn-glycero-3-phosphate + H(+). It catalyses the reaction N-decanoyl-1-hexadecanoyl-2-(9Z,12Z-octadecadienoyl)-sn-glycero-3-phosphoethanolamine + H2O = N-decanoyl ethanolamine + 1-hexadecanoyl-2-(9Z,12Z-octadecadienoyl)-sn-glycero-3-phosphate + H(+). It carries out the reaction N-dodecanoyl-1,2-di-(9Z-octadecenoyl)-sn-glycero-3-phosphoethanolamine + H2O = N-dodecanoylethanolamine + 1,2-di-(9Z-octadecenoyl)-sn-glycero-3-phosphate + H(+). The catalysed reaction is N-tetradecanoyl-1,2-di-(9Z-octadecenoyl)-sn-glycero-3-phosphoethanolamine + H2O = N-tetradecanoylethanolamine + 1,2-di-(9Z-octadecenoyl)-sn-glycero-3-phosphate + H(+). The enzyme catalyses N-hexadecanoyl-1,2-di-(9Z-octadecenoyl)-sn-glycero-3-phosphoethanolamine + H2O = N-hexadecanoylethanolamine + 1,2-di-(9Z-octadecenoyl)-sn-glycero-3-phosphate + H(+). It catalyses the reaction N,1-dihexadecanoyl-2-(9Z,12Z-octadecadienoyl)-sn-glycero-3-phosphoethanolamine + H2O = 1-hexadecanoyl-2-(9Z,12Z-octadecadienoyl)-sn-glycero-3-phosphate + N-hexadecanoylethanolamine + H(+). It carries out the reaction N-octadecanoyl-1,2-di-(9Z-octadecenoyl)-sn-glycero-3-phosphoethanolamine + H2O = N-octadecanoyl ethanolamine + 1,2-di-(9Z-octadecenoyl)-sn-glycero-3-phosphate + H(+). The catalysed reaction is N,1,2-tri-(9Z-octadecenoyl)-sn-glycero-3-phosphoethanolamine + H2O = N-(9Z-octadecenoyl) ethanolamine + 1,2-di-(9Z-octadecenoyl)-sn-glycero-3-phosphate + H(+). The enzyme catalyses N-(5Z,8Z,11Z,14Z-eicosatetraenoyl)-1,2-diacyl-sn-glycero-3-phosphoethanolamine + H2O = N-(5Z,8Z,11Z,14Z-eicosatetraenoyl)-ethanolamine + a 1,2-diacyl-sn-glycero-3-phosphate + H(+). It catalyses the reaction N-(5Z,8Z,11Z,14Z-eicosatetraenoyl)-1,2-di-(9Z-octadecenoyl)-sn-glycero-3-phosphoethanolamine + H2O = N-(5Z,8Z,11Z,14Z-eicosatetraenoyl)-ethanolamine + 1,2-di-(9Z-octadecenoyl)-sn-glycero-3-phosphate + H(+). It carries out the reaction 1-O-(1Z-octadecenoyl)-2-(9Z-octadecenoyl)-sn-glycero-3-phospho-N-hexadecanoyl-ethanolamine + H2O = 1-O-(1Z-octadecenoyl)-2-(9Z-octadecenoyl)-sn-glycero-3-phosphate + N-hexadecanoylethanolamine + H(+). The catalysed reaction is N,1-diacyl-sn-glycero-3-phosphoethanolamine + H2O = an N-acylethanolamine + a 1-acyl-sn-glycero-3-phosphate + H(+). The enzyme catalyses N,1-dihexadecanoyl-sn-glycero-3-phosphoethanolamine + H2O = N-hexadecanoylethanolamine + 1-hexadecanoyl-sn-glycero-3-phosphate + H(+). It catalyses the reaction N-(5Z,8Z,11Z,14Z-eicosatetraenoyl)-1-(9Z-octadecenoyl)-sn-glycero-3-phosphoethanolamine + H2O = N-(5Z,8Z,11Z,14Z-eicosatetraenoyl)-ethanolamine + 1-(9Z-octadecenoyl)-sn-glycero-3-phosphate + H(+). Activated by divalent cations. Activated by bile acids and their conjugates, except for lithocholic acid which is rather inhibitory. Binding of deoxycholic acid favors the selective release of anandamide and likely other unsatured long FAEs. Inhibited by phosphatidylethanolamines. D-type phospholipase that hydrolyzes N-acyl-phosphatidylethanolamines (NAPEs) to produce bioactive N-acylethanolamines/fatty acid ethanolamides (NAEs/FAEs) and phosphatidic acid. Cleaves the terminal phosphodiester bond of diacyl- and alkenylacyl-NAPEs, primarily playing a role in the generation of long-chain saturated and monounsaturated NAEs in the brain. May control NAPE homeostasis in dopaminergic neuron membranes and regulate neuron survival, partly through RAC1 activation. As a regulator of lipid metabolism in the adipose tissue, mediates the crosstalk between adipocytes, gut microbiota and immune cells to control body temperature and weight. In particular, regulates energy homeostasis by promoting cold-induced brown or beige adipocyte differentiation program to generate heat from fatty acids and glucose. Has limited D-type phospholipase activity toward N-acyl lyso-NAPEs. The polypeptide is N-acyl-phosphatidylethanolamine-hydrolyzing phospholipase D (NAPEPLD) (Homo sapiens (Human)).